The sequence spans 78 residues: Large ribosomal subunit protein bL28 (78 aa).

Belongs to the bacterial ribosomal protein bL28 family.

The sequence is that of Large ribosomal subunit protein bL28 from Alcanivorax borkumensis (strain ATCC 700651 / DSM 11573 / NCIMB 13689 / SK2).